A 1071-amino-acid polypeptide reads, in one-letter code: DNA-directed RNA polymerase subunit beta (1071 aa).

Belongs to the RNA polymerase beta chain family. In plastids the minimal PEP RNA polymerase catalytic core is composed of four subunits: alpha, beta, beta', and beta''. When a (nuclear-encoded) sigma factor is associated with the core the holoenzyme is formed, which can initiate transcription.

It is found in the plastid. Its subcellular location is the chloroplast. It carries out the reaction RNA(n) + a ribonucleoside 5'-triphosphate = RNA(n+1) + diphosphate. Its function is as follows. DNA-dependent RNA polymerase catalyzes the transcription of DNA into RNA using the four ribonucleoside triphosphates as substrates. The polypeptide is DNA-directed RNA polymerase subunit beta (Acorus gramineus (Dwarf sweet flag)).